Reading from the N-terminus, the 199-residue chain is dITP/XTP pyrophosphatase (199 aa).

8 to 13 is a binding site for substrate; sequence SGNAGK. Catalysis depends on Asp-69, which acts as the Proton acceptor. Asp-69 contacts Mg(2+). Residues Ser-70, 154-157, Lys-177, and 182-183 each bind substrate; these read FGYN and HR.

Belongs to the HAM1 NTPase family. Homodimer. It depends on Mg(2+) as a cofactor.

The enzyme catalyses XTP + H2O = XMP + diphosphate + H(+). The catalysed reaction is dITP + H2O = dIMP + diphosphate + H(+). It carries out the reaction ITP + H2O = IMP + diphosphate + H(+). In terms of biological role, pyrophosphatase that catalyzes the hydrolysis of nucleoside triphosphates to their monophosphate derivatives, with a high preference for the non-canonical purine nucleotides XTP (xanthosine triphosphate), dITP (deoxyinosine triphosphate) and ITP. Seems to function as a house-cleaning enzyme that removes non-canonical purine nucleotides from the nucleotide pool, thus preventing their incorporation into DNA/RNA and avoiding chromosomal lesions. The sequence is that of dITP/XTP pyrophosphatase from Xanthomonas campestris pv. campestris (strain 8004).